We begin with the raw amino-acid sequence, 784 residues long: Cell wall protein Lmo0130 (784 aa).

Residues 1–34 (MKVNKFFKKTTHVLLVAGLTIGLTAPFTGTTAQA) form the signal peptide. Positions 690–761 (ATTPPDNGNG…NTSLPTTGDT (72 aa)) are disordered. The span at 697 to 729 (GNGGTDNGNGNGNNGGTDGNGGTNNGNGSGTNG) shows a compositional bias: gly residues. Residues 730-759 (GTTTTEDPTTTTSNTSTTGTSSNTSLPTTG) show a composition bias toward low complexity. The LPXTG sorting signal signature appears at 755 to 759 (LPTTG). Thr-758 carries the pentaglycyl murein peptidoglycan amidated threonine modification. Residues 759–784 (GDTAGLATVFGVILTTTALYVLRKRS) constitute a propeptide, removed by sortase A.

Its subcellular location is the secreted. It localises to the cell wall. In Listeria monocytogenes serovar 1/2a (strain ATCC BAA-679 / EGD-e), this protein is Cell wall protein Lmo0130.